A 1012-amino-acid chain; its full sequence is Putative cellulose synthase-like protein D5 (1012 aa).

The interval methionine 1–valine 85 is disordered. Over residues proline 20 to glycine 37 the composition is skewed to low complexity. Residues glycine 57–leucine 69 are compositionally biased toward basic and acidic residues. The next 2 membrane-spanning stretches (helical) occupy residues isoleucine 150–valine 170 and alanine 180–leucine 200. Aspartate 280 is an active-site residue. The disordered stretch occupies residues proline 597–aspartate 620. Residues glycine 606–glycine 618 show a composition bias toward gly residues. The active site involves aspartate 717. Helical transmembrane passes span leucine 799 to valine 819, threonine 825 to valine 845, leucine 871 to leucine 891, serine 914 to valine 934, leucine 948 to glycine 968, and threonine 978 to isoleucine 998.

This sequence belongs to the glycosyltransferase 2 family. Plant cellulose synthase-like D subfamily.

Its subcellular location is the golgi apparatus membrane. Its function is as follows. Thought to be a Golgi-localized beta-glycan synthase that polymerize the backbones of noncellulosic polysaccharides (hemicelluloses) of plant cell wall. This Oryza sativa subsp. indica (Rice) protein is Putative cellulose synthase-like protein D5 (CSLD5).